The primary structure comprises 65 residues: Large ribosomal subunit protein bL35 (65 aa).

This sequence belongs to the bacterial ribosomal protein bL35 family.

The polypeptide is Large ribosomal subunit protein bL35 (Acaryochloris marina (strain MBIC 11017)).